The following is a 145-amino-acid chain: MSQKAIKGYINLIIPAAGATPAPPIGPALGQRKVNIAAFCKDFNDATQAMEKGIPLPTVITVYEDRSFSFKIKTSPASYFLKKYAKITKGSSATKKEAVVGKVTMDDCREIAKLKMPDLNTKNIEAATKIICGSAASMGLEVVGN.

Belongs to the universal ribosomal protein uL11 family. As to quaternary structure, part of the ribosomal stalk of the 50S ribosomal subunit. Interacts with L10 and the large rRNA to form the base of the stalk. L10 forms an elongated spine to which L12 dimers bind in a sequential fashion forming a multimeric L10(L12)X complex. One or more lysine residues are methylated.

Functionally, forms part of the ribosomal stalk which helps the ribosome interact with GTP-bound translation factors. This Rickettsia canadensis (strain McKiel) protein is Large ribosomal subunit protein uL11.